The sequence spans 274 residues: Bis(5'-nucleosyl)-tetraphosphatase, symmetrical (274 aa).

This sequence belongs to the Ap4A hydrolase family.

The enzyme catalyses P(1),P(4)-bis(5'-adenosyl) tetraphosphate + H2O = 2 ADP + 2 H(+). Hydrolyzes diadenosine 5',5'''-P1,P4-tetraphosphate to yield ADP. In Shewanella putrefaciens (strain CN-32 / ATCC BAA-453), this protein is Bis(5'-nucleosyl)-tetraphosphatase, symmetrical.